A 682-amino-acid polypeptide reads, in one-letter code: Zinc finger protein 16 (682 aa).

Over residues 1-10 (MPSLRTRREE) the composition is skewed to basic and acidic residues. The tract at residues 1–43 (MPSLRTRREEAEMELSVPGPSPWTPAAQARVRDAPAVTHPGSA) is disordered. The necessary for transcription activation stretch occupies residues 62 to 210 (YQQPDCDTRT…GVPTAESPLI (149 aa)). The C2H2-type 1; degenerate zinc finger occupies 209–231 (LICNECGKTFQGNPDLIQRQIVH). The C2H2-type 2; degenerate zinc-finger motif lies at 237-259 (FMCDDCGKTFSQNSVLKNRHRSH). K253 is covalently cross-linked (Glycyl lysine isopeptide (Lys-Gly) (interchain with G-Cter in SUMO2)). C2H2-type zinc fingers lie at residues 265–287 (YQCSECGKAFRGHSDFSRHQSHH), 293–315 (YMCNECGKAFSQNSSLKKHQKSH), 321–343 (YECNECGKAFRRSSNLIQHQRIH), 349–371 (YVCSECGKAFRRSSNLIKHHRTH), 377–399 (FECGECGKAFSQSAHLRKHQRVH), 405–427 (YECNDCGKPFSRVSNLIKHHRVH), 433–455 (YKCSDCGKAFSQSSSLIQHRRIH), and 461–483 (HVCNVCGKAFSYSSVLRKHQIIH). 2 required for nuclear localization regions span residues 268–393 (SECG…AHLR) and 341–373 (RIHSGEKPYVCSECGKAFRRSSNLIKHHRTHTG). Residues 473–503 (SSVLRKHQIIHTGEKPYRCSVCGKAFSHSSA) are required for nuclear localization. N6-acetyllysine is present on K487. C2H2-type zinc fingers lie at residues 489–511 (YRCSVCGKAFSHSSALIQHQGVH), 517–539 (YACHECGKTFGRSSNLILHQRVH), 545–567 (YECTECGKTFSQSSTLIQHQRIH), 573–595 (HECNQCGKAFNRSSNLIHHQKVH), 601–623 (YTCVECGKGFSQSSHLIQHQIIH), 629–651 (YKCSECGKAFSQRSVLIQHQRIH), and 657–679 (YDCAACGKAFSQRSKLIKHQLIH).

This sequence belongs to the krueppel C2H2-type zinc-finger protein family. As to quaternary structure, interacts with INCA1; the interaction inhibits INCA1 activity and induces the cell cycle process. In terms of tissue distribution, ubiquitous.

It localises to the nucleus. In terms of biological role, acts as a transcriptional activator. Promotes cell proliferation by facilitating the cell cycle phase transition from the S to G2/M phase. Involved in both the hemin- and phorbol myristate acetate (PMA)-induced erythroid and megakaryocytic differentiation, respectively. Also plays a role as an inhibitor of cell apoptosis. This chain is Zinc finger protein 16 (ZNF16), found in Homo sapiens (Human).